Reading from the N-terminus, the 183-residue chain is Pyruvoyl-dependent arginine decarboxylase 2 (183 aa).

At Ser41 the chain carries Pyruvic acid (Ser).

Belongs to the PdaD family. Pyruvate is required as a cofactor.

It carries out the reaction L-arginine + H(+) = agmatine + CO2. This Methanosarcina mazei (strain ATCC BAA-159 / DSM 3647 / Goe1 / Go1 / JCM 11833 / OCM 88) (Methanosarcina frisia) protein is Pyruvoyl-dependent arginine decarboxylase 2 (pdaD2).